The chain runs to 188 residues: Elongation factor P (188 aa).

Residue Lys-34 is modified to N6-(3,6-diaminohexanoyl)-5-hydroxylysine.

The protein belongs to the elongation factor P family. May be beta-lysylated on the epsilon-amino group of Lys-34 by the combined action of EpmA and EpmB, and then hydroxylated on the C5 position of the same residue by EpmC (if this protein is present). Lysylation is critical for the stimulatory effect of EF-P on peptide-bond formation. The lysylation moiety may extend toward the peptidyltransferase center and stabilize the terminal 3-CCA end of the tRNA. Hydroxylation of the C5 position on Lys-34 may allow additional potential stabilizing hydrogen-bond interactions with the P-tRNA.

It localises to the cytoplasm. It functions in the pathway protein biosynthesis; polypeptide chain elongation. In terms of biological role, involved in peptide bond synthesis. Alleviates ribosome stalling that occurs when 3 or more consecutive Pro residues or the sequence PPG is present in a protein, possibly by augmenting the peptidyl transferase activity of the ribosome. Modification of Lys-34 is required for alleviation. The polypeptide is Elongation factor P (Vibrio vulnificus (strain CMCP6)).